The primary structure comprises 646 residues: Acetyl-coenzyme A synthetase (646 aa).

CoA is bound by residues 189 to 192, Thr-307, and Asn-331; that span reads RGPK. Residues 383-385, 407-412, Asp-496, and Arg-511 contribute to the ATP site; these read GEP and DTWWQT. Ser-519 serves as a coordination point for CoA. An ATP-binding site is contributed by Arg-522. Mg(2+) contacts are provided by Val-533, His-535, and Val-538. Residue Arg-580 participates in CoA binding. The residue at position 605 (Lys-605) is an N6-acetyllysine.

The protein belongs to the ATP-dependent AMP-binding enzyme family. Requires Mg(2+) as cofactor. In terms of processing, acetylated. Deacetylation by the SIR2-homolog deacetylase activates the enzyme.

The enzyme catalyses acetate + ATP + CoA = acetyl-CoA + AMP + diphosphate. In terms of biological role, catalyzes the conversion of acetate into acetyl-CoA (AcCoA), an essential intermediate at the junction of anabolic and catabolic pathways. AcsA undergoes a two-step reaction. In the first half reaction, AcsA combines acetate with ATP to form acetyl-adenylate (AcAMP) intermediate. In the second half reaction, it can then transfer the acetyl group from AcAMP to the sulfhydryl group of CoA, forming the product AcCoA. The sequence is that of Acetyl-coenzyme A synthetase from Desulfatibacillum aliphaticivorans.